Consider the following 238-residue polypeptide: Survival of motor neuron-related-splicing factor 30 (238 aa).

A Tudor domain is found at 72 to 132; it reads SWKVGDKCMA…KPVEEGRKAK (61 aa). Positions 142–160 match the Nuclear localization signal motif; sequence KKEMIAQQREYKKKKALKK. Serine 201 carries the phosphoserine modification. Residue lysine 219 is modified to N6-acetyllysine.

It belongs to the SMN family. As to quaternary structure, associates with spliceosomes. Associates with U4/U5/U6 tri-snRNP and with U2 snRNP.

The protein resides in the nucleus speckle. The protein localises to the nucleus. It localises to the cajal body. In terms of biological role, involved in spliceosome assembly. This chain is Survival of motor neuron-related-splicing factor 30 (Smndc1), found in Rattus norvegicus (Rat).